Consider the following 666-residue polypeptide: ATP-dependent zinc metalloprotease FtsH (666 aa).

The Cytoplasmic portion of the chain corresponds to 1–6; it reads MKSETG. The chain crosses the membrane as a helical span at residues 7–27; the sequence is YMGFVVVLVFMVLLALQLATL. The Periplasmic segment spans residues 28–116; the sequence is SAPATQIAYS…TRYRGADDDT (89 aa). Residues 117–137 traverse the membrane as a helical segment; the sequence is WIGTLASWIVPIAVFALVWNL. The Cytoplasmic segment spans residues 138 to 666; the sequence is MLRRPRGGLQ…ADNADHSVPQ (529 aa). An ATP-binding site is contributed by 210–217; it reads GAPGTGKT. Position 432 (His-432) interacts with Zn(2+). The active site involves Glu-433. Positions 436 and 509 each coordinate Zn(2+). The tract at residues 612-666 is disordered; the sequence is NDEPTPEPGARDPGGDAAKRSGIGAAPAKPPAEVGSAELRDPARKADNADHSVPQ. Composition is skewed to basic and acidic residues over residues 620-630 and 649-666; these read GARDPGGDAAK and ELRD…SVPQ.

It in the central section; belongs to the AAA ATPase family. The protein in the C-terminal section; belongs to the peptidase M41 family. In terms of assembly, homohexamer. Requires Zn(2+) as cofactor.

It localises to the cell inner membrane. Its function is as follows. Acts as a processive, ATP-dependent zinc metallopeptidase for both cytoplasmic and membrane proteins. Plays a role in the quality control of integral membrane proteins. The protein is ATP-dependent zinc metalloprotease FtsH of Burkholderia pseudomallei (strain 1710b).